Reading from the N-terminus, the 370-residue chain is NADH-quinone oxidoreductase subunit D 2 (370 aa).

Belongs to the complex I 49 kDa subunit family. NDH-1 is composed of 14 different subunits. Subunits NuoB, C, D, E, F, and G constitute the peripheral sector of the complex.

It is found in the cell inner membrane. The catalysed reaction is a quinone + NADH + 5 H(+)(in) = a quinol + NAD(+) + 4 H(+)(out). Functionally, NDH-1 shuttles electrons from NADH, via FMN and iron-sulfur (Fe-S) centers, to quinones in the respiratory chain. The immediate electron acceptor for the enzyme in this species is believed to be ubiquinone. Couples the redox reaction to proton translocation (for every two electrons transferred, four hydrogen ions are translocated across the cytoplasmic membrane), and thus conserves the redox energy in a proton gradient. The chain is NADH-quinone oxidoreductase subunit D 2 from Solibacter usitatus (strain Ellin6076).